A 65-amino-acid polypeptide reads, in one-letter code: uncharacterized protein (65 aa).

This is an uncharacterized protein from Acidianus filamentous virus 1 (isolate United States/Yellowstone) (AFV-1).